The following is a 474-amino-acid chain: Cysteine--tRNA ligase (474 aa).

Cysteine 29 is a binding site for Zn(2+). A 'HIGH' region motif is present at residues 31 to 41 (ITPYDHVHVGH). 3 residues coordinate Zn(2+): cysteine 215, histidine 240, and glutamate 244. Residues 273–277 (KMSKS) carry the 'KMSKS' region motif. Residue lysine 276 participates in ATP binding.

It belongs to the class-I aminoacyl-tRNA synthetase family. It depends on Zn(2+) as a cofactor.

The protein resides in the cytoplasm. The enzyme catalyses tRNA(Cys) + L-cysteine + ATP = L-cysteinyl-tRNA(Cys) + AMP + diphosphate. The protein is Cysteine--tRNA ligase of Pyrobaculum aerophilum (strain ATCC 51768 / DSM 7523 / JCM 9630 / CIP 104966 / NBRC 100827 / IM2).